The chain runs to 336 residues: Transcription initiation factor IIB (336 aa).

Residues 41-72 (QKLRCPICGNTVFIEDAERGQIVCASCGYVLM) form a TFIIB-type zinc finger. Positions 45, 48, 64, and 67 each coordinate Zn(2+). Repeat copies occupy residues 152-235 (HELN…AREL) and 246-327 (QYVP…ELAK).

It belongs to the TFIIB family.

Stabilizes TBP binding to an archaeal box-A promoter. Also responsible for recruiting RNA polymerase II to the pre-initiation complex (DNA-TBP-TFIIB). The protein is Transcription initiation factor IIB of Caldivirga maquilingensis (strain ATCC 700844 / DSM 13496 / JCM 10307 / IC-167).